The following is a 247-amino-acid chain: GTP cyclohydrolase 1 type 2 homolog (247 aa).

Positions 63, 64, 101, 215, and 219 each coordinate a divalent metal cation.

This sequence belongs to the GTP cyclohydrolase I type 2/NIF3 family. As to quaternary structure, homohexamer.

The sequence is that of GTP cyclohydrolase 1 type 2 homolog from Buchnera aphidicola subsp. Acyrthosiphon pisum (strain APS) (Acyrthosiphon pisum symbiotic bacterium).